The following is a 158-amino-acid chain: Small ribosomal subunit protein uS7 (158 aa).

This sequence belongs to the universal ribosomal protein uS7 family. In terms of assembly, part of the 30S ribosomal subunit. Contacts proteins S9 and S11.

Functionally, one of the primary rRNA binding proteins, it binds directly to 16S rRNA where it nucleates assembly of the head domain of the 30S subunit. Is located at the subunit interface close to the decoding center, probably blocks exit of the E-site tRNA. The polypeptide is Small ribosomal subunit protein uS7 (Acidiphilium cryptum (strain JF-5)).